The following is a 609-amino-acid chain: MLKLLSLMVPLASAAVIHRRDANISAIASEWNSTSNSSSSLSLNRPAVHYSPEEGWMNDPNGLWYDAKEEDWHIYYQYYPDAPHWGLPLTWGHAVSKDLTVWDEQGVAFGPEFETAGAFSGSMVIDYNNTSGFFNSSTDPRQRVVAIWTLDYSGSETQQLSYSHDGGYTFTEYSDNPVLDIDSDAFRDPKVFWYQGEDSESEGNWVMTVAEADRFSVLIYSSPDLKNWTLESNFSREGYLGYNYECPGLVKVPYVKNTTYASAPGSNITSSGPLHPNSTVSFSNSSSIAWNASSVPLNITLSNSTLVDETSQLEEVGYAWVMIVSFNPGSILGGSGTEYFIGDFNGTHFEPLDKQTRFLDLGKDYYALQTFFNTPNEVDVLGIAWASNWQYANQVPTDPWRSSMSLVRNFTITEYNINSNTTALVLNSQPVLDFTSLRKNGTSYTLENLTLNSSSHEVLEFEDPTGVFEFSLEYSVNFTGIHNWVFTDLSLYFQGDKDSDEYLRLGYEANSKQFFLDRGHSNIPFVQENPFFTQRLSVSNPPSSNSSTFDVYGIVDRNIIELYFNNGTVTSTNTFFFSTGNNIGSIIVKSGVDDVYEIESLKVNQFYVD.

The N-terminal stretch at 1 to 14 is a signal peptide; sequence MLKLLSLMVPLASA. N-linked (GlcNAc...) asparagine glycans are attached at residues Asn23, Asn32, and Asn36. Residues 56–59, Gln77, and 119–120 contribute to the substrate site; these read WMND and FS. Asp59 is an active-site residue. Asn128, Asn129, and Asn135 each carry an N-linked (GlcNAc...) asparagine glycan. 187–188 is a substrate binding site; the sequence is RD. N-linked (GlcNAc...) asparagine glycosylation is found at Asn227 and Asn233. Residue Glu245 coordinates substrate. Residues Asn257, Asn267, Asn277, Asn284, Asn291, Asn298, Asn303, and Asn345 are each glycosylated (N-linked (GlcNAc...) asparagine). A substrate-binding site is contributed by Trp389. N-linked (GlcNAc...) asparagine glycosylation is found at Asn409, Asn420, Asn440, Asn448, Asn452, Asn477, Asn545, and Asn566.

This sequence belongs to the glycosyl hydrolase 32 family.

The catalysed reaction is Hydrolysis of terminal non-reducing beta-D-fructofuranoside residues in beta-D-fructofuranosides.. The chain is Invertase (INV1) from Kluyveromyces lactis (strain ATCC 8585 / CBS 2359 / DSM 70799 / NBRC 1267 / NRRL Y-1140 / WM37) (Yeast).